Here is a 160-residue protein sequence, read N- to C-terminus: Large ribosomal subunit protein uL16 (160 aa).

Residues 138 to 160 form a disordered region; it reads INLSSDSSGEGKTGKDSKEEVKK. A compositionally biased stretch (basic and acidic residues) spans 149 to 160; it reads KTGKDSKEEVKK.

Belongs to the universal ribosomal protein uL16 family. In terms of assembly, part of the 50S ribosomal subunit.

In terms of biological role, binds 23S rRNA and is also seen to make contacts with the A and possibly P site tRNAs. The protein is Large ribosomal subunit protein uL16 of Prochlorococcus marinus subsp. pastoris (strain CCMP1986 / NIES-2087 / MED4).